A 273-amino-acid polypeptide reads, in one-letter code: Histidine racemase (273 aa).

Residue cysteine 72 is the Proton acceptor of the active site. Catalysis depends on cysteine 211, which acts as the Proton donor.

This sequence belongs to the histidine racemase family. In terms of assembly, homodimer.

The protein resides in the cytoplasm. It carries out the reaction L-histidine = D-histidine. Isomerase that catalyzes the conversion of L-histidine to D-histidine. Functions the biosynthesis of the metallophore staphylopine, which is involved in the acquisition of nickel, cobalt, zinc, copper, and iron, and thus enables bacterial growth inside the host, where metal access is limited. Therefore, this enzyme probably contributes to staphylococcal virulence. The reaction is reversible in vitro, the enzyme can produce D-histidine from the L-stereoisomer and vice versa. Appears to be specific for histidine as it cannot use other amino acids as substrate, including L-alanine and L-methionine. This Staphylococcus aureus (strain Mu50 / ATCC 700699) protein is Histidine racemase.